The primary structure comprises 428 residues: Dual-specificity RNA methyltransferase RlmN (428 aa).

Positions 1 to 17 (MPLHRVEALGEPQDRTG) are enriched in basic and acidic residues. Residues 1–44 (MPLHRVEALGEPQDRTGKTFSGRTNGPISSPLTDTERRMSIPQN) are disordered. Polar residues predominate over residues 18–33 (KTFSGRTNGPISSPLT). Catalysis depends on E136, which acts as the Proton acceptor. The Radical SAM core domain maps to 142-381 (EDDRGALCVS…APIRMPRGRD (240 aa)). C149 and C386 are oxidised to a cystine. C156, C160, and C163 together coordinate [4Fe-4S] cluster. S-adenosyl-L-methionine-binding positions include 212–213 (GE), S244, 266–268 (SLH), and N343. The active-site S-methylcysteine intermediate is the C386.

It belongs to the radical SAM superfamily. RlmN family. [4Fe-4S] cluster serves as cofactor.

It is found in the cytoplasm. It catalyses the reaction adenosine(2503) in 23S rRNA + 2 reduced [2Fe-2S]-[ferredoxin] + 2 S-adenosyl-L-methionine = 2-methyladenosine(2503) in 23S rRNA + 5'-deoxyadenosine + L-methionine + 2 oxidized [2Fe-2S]-[ferredoxin] + S-adenosyl-L-homocysteine. The catalysed reaction is adenosine(37) in tRNA + 2 reduced [2Fe-2S]-[ferredoxin] + 2 S-adenosyl-L-methionine = 2-methyladenosine(37) in tRNA + 5'-deoxyadenosine + L-methionine + 2 oxidized [2Fe-2S]-[ferredoxin] + S-adenosyl-L-homocysteine. Its function is as follows. Specifically methylates position 2 of adenine 2503 in 23S rRNA and position 2 of adenine 37 in tRNAs. m2A2503 modification seems to play a crucial role in the proofreading step occurring at the peptidyl transferase center and thus would serve to optimize ribosomal fidelity. This chain is Dual-specificity RNA methyltransferase RlmN, found in Rhodospirillum rubrum (strain ATCC 11170 / ATH 1.1.1 / DSM 467 / LMG 4362 / NCIMB 8255 / S1).